The sequence spans 223 residues: Twisted gastrulation protein homolog 1 (223 aa).

An N-terminal signal peptide occupies residues 1–25 (MKLHYVAVLTLAILMFLTWLPASLS). 2 N-linked (GlcNAc...) asparagine glycosylation sites follow: asparagine 52 and asparagine 81.

It belongs to the twisted gastrulation protein family. Interacts with CHRD and BMP4. This interaction enhances CHRD/BMP4 complex formation. Interacts with BMP7.

It localises to the secreted. Functionally, may be involved in dorsoventral axis formation. Seems to antagonize BMP signaling by forming ternary complexes with CHRD and BMPs, thereby preventing BMPs from binding to their receptors. In addition to the anti-BMP function, also has pro-BMP activity, partly mediated by cleavage and degradation of CHRD, which releases BMPs from ternary complexes. May be an important modulator of BMP-regulated cartilage development and chondrocyte differentiation. May play a role in thymocyte development. The chain is Twisted gastrulation protein homolog 1 (TWSG1) from Pongo abelii (Sumatran orangutan).